A 272-amino-acid chain; its full sequence is Acyl-[acyl-carrier-protein]--UDP-N-acetylglucosamine O-acyltransferase (272 aa).

Belongs to the transferase hexapeptide repeat family. LpxA subfamily. In terms of assembly, homotrimer.

The protein localises to the cytoplasm. The catalysed reaction is a (3R)-hydroxyacyl-[ACP] + UDP-N-acetyl-alpha-D-glucosamine = a UDP-3-O-[(3R)-3-hydroxyacyl]-N-acetyl-alpha-D-glucosamine + holo-[ACP]. The protein operates within glycolipid biosynthesis; lipid IV(A) biosynthesis; lipid IV(A) from (3R)-3-hydroxytetradecanoyl-[acyl-carrier-protein] and UDP-N-acetyl-alpha-D-glucosamine: step 1/6. Its function is as follows. Involved in the biosynthesis of lipid A, a phosphorylated glycolipid that anchors the lipopolysaccharide to the outer membrane of the cell. This Rhizobium leguminosarum bv. trifolii (strain WSM2304) protein is Acyl-[acyl-carrier-protein]--UDP-N-acetylglucosamine O-acyltransferase.